We begin with the raw amino-acid sequence, 389 residues long: 5-hydroxytryptamine receptor 1B (389 aa).

The disordered stretch occupies residues 1–27 (MEDAGTPCAPPPPAGSQTGAPPANLSS). Residues 1 to 45 (MEDAGTPCAPPPPAGSQTGAPPANLSSAPHNCSAEGYIYQDSIAL) lie on the Extracellular side of the membrane. Residues 15 to 27 (GSQTGAPPANLSS) are compositionally biased toward polar residues. Asn-24 and Asn-31 each carry an N-linked (GlcNAc...) asparagine glycan. The chain crosses the membrane as a helical span at residues 46–71 (PWKVLLAILLALLTLATTLSNAFVIA). Over 72–85 (TVYRTRKLHTPANY) the chain is Cytoplasmic. Residues 86 to 110 (LIASLAVTDLLVSILVMPISTMYAV) traverse the membrane as a helical segment. At 111–118 (TGRWTLGQ) the chain is on the extracellular side. Residues 119–144 (VVCDLWLSSDITCCTASILHLCVIAL) traverse the membrane as a helical segment. A disulfide bridge links Cys-121 with Cys-198. Ergotamine is bound by residues Asp-128 and Thr-133. The short motif at 145–147 (DRY) is the DRY motif; important for ligand-induced conformation changes and signaling element. Over 145-164 (DRYWAITDAVEYSAKRTPKR) the chain is Cytoplasmic. A helical membrane pass occupies residues 165 to 183 (AAVMIALVWVFSISISLPP). The Extracellular segment spans residues 184 to 204 (FFWRQAKAEEEVSDCVVNTDH). Val-200 provides a ligand contact to ergotamine. A helical membrane pass occupies residues 205–228 (ILYTVYSTVGAFYFPTLLLIALYG). Topologically, residues 229 to 314 (RIYVEARSRI…AARERKATKT (86 aa)) are cytoplasmic. The segment covering 258–271 (DSPGSTSSVTSVNS) has biased composition (polar residues). The disordered stretch occupies residues 258 to 281 (DSPGSTSSVTSVNSRAPDVPSESG). Residues 315–336 (LGIILGAFIVCWLPFFIISLVM) form a helical membrane-spanning segment. The Extracellular portion of the chain corresponds to 337–346 (PICKDACWFH). The chain crosses the membrane as a helical span at residues 347-369 (LAIFDFFTWLGYLNSLINPIIYT). Positions 364-368 (NPIIY) match the NPxxY motif; important for ligand-induced conformation changes and signaling motif. The Cytoplasmic segment spans residues 370 to 389 (MSNEDFKQAFHKLIRFKCAS). A lipid anchor (S-palmitoyl cysteine) is attached at Cys-387.

Belongs to the G-protein coupled receptor 1 family. In terms of assembly, homodimer. Heterodimer with HTR1D. Phosphorylated. Desensitization of the receptor may be mediated by its phosphorylation. Post-translationally, palmitoylated.

The protein localises to the cell membrane. Functionally, G-protein coupled receptor for 5-hydroxytryptamine (serotonin). Also functions as a receptor for ergot alkaloid derivatives, various anxiolytic and antidepressant drugs and other psychoactive substances, such as lysergic acid diethylamide (LSD). Ligand binding causes a conformation change that triggers signaling via guanine nucleotide-binding proteins (G proteins) and modulates the activity of downstream effectors, such as adenylate cyclase. HTR1B is coupled to G(i)/G(o) G alpha proteins and mediates inhibitory neurotransmission by inhibiting adenylate cyclase activity. Arrestin family members inhibit signaling via G proteins and mediate activation of alternative signaling pathways. Regulates the release of 5-hydroxytryptamine, dopamine and acetylcholine in the brain, and thereby affects neural activity, nociceptive processing, pain perception, mood and behavior. Besides, plays a role in vasoconstriction of cerebral arteries. The polypeptide is 5-hydroxytryptamine receptor 1B (HTR1B) (Vulpes vulpes (Red fox)).